The primary structure comprises 602 residues: MKQNINIGNVVDDGTGDYLRKGGIKINENFDELYYELGDGDVPYSAGAWKTYNASSGQTLTAEWGKSYAINTSSGRVTINLPKGTVNDYNKVIRARDVFATWNVNPVTLVAASGDTIKGSAVPVEINVRFSDLELVYCAPGRWEYVKNKQIDKITSSDISNVARKEFLVEVQGQTDFLDVFRGTSYNVNNIRVKHRGNELYYGDVFSENSDFGSPGENEGELVPLDGFNIRLRQPCNIGDTVQIETFMDGVSQWRSSYTRRQIRLLDSKLTSKTSLEGSIYVTDLSTMKSIPFSAFGLIPGEPINPNSLEVRFNGILQELAGTVGMPLFHCVGADSDDEVECSVLGGTWEQSHTDYSVETDENGIPEILHFDSVFEHGDIINITWFNNDLGTLLTKDEIIDETDNLYVSQGPGVDISGDVNLTDFDKIGWPNVEAVQSYQRAFNAVSNIFDTIYPIGTIYENAVNPNNPVTYMGFGSWKLFGQGKVLVGWNEDISDPNFALNNNDLDSGGNPSHTAGGTGGSTSVTLENANLPATETDEEVLIVDENGSVIVGGCQYDPDESGPIYTKYREAKASTNSTHTPPTSITNIQPYITVYRWIRIA.

Positions 501–512 are enriched in polar residues; it reads LNNNDLDSGGNP. A disordered region spans residues 501-523; sequence LNNNDLDSGGNPSHTAGGTGGST.

It belongs to the T4likevirus baseplate wedge protein gp10 family. In terms of assembly, homotrimer; disulfide-linked. Heteromultimer with gp7; a gp10 molecule is disulfide-linked to gp7 and the other two remaining gp10 molecules form a disulfide bond. The gp10 trimer interacts with gp11 trimer and with the short tail fiber (STF) composed of the gp12 trimer. Part of the baseplate macromolecular complex which consists of gp5, gp5.4, gp27 (central spike complex); gp6, gp25, gp53 (inner baseplate); gp7, gp8 (intermediate baseplate); gp9, gp10, gp11, gp12 (peripheral); gp48 and gp54 (proximal region of the tail tube).

The protein localises to the virion. In terms of biological role, peripheral baseplate protein that is part of the tail fiber network. Connects the short tail fibers to the baseplate. During infection, the baseplate undergoes a conformational change from a dome-shaped to a star-shaped structure. At this point, gp10 rotates and acts as a lever that unfolds the short tail fibers, which then interact with host cell surface receptors. Involved in the tail assembly. This is Baseplate wedge protein gp10 (10) from Escherichia coli (Bacteriophage T4).